A 267-amino-acid chain; its full sequence is Methyl-coenzyme M reductase II subunit gamma (267 aa).

Position 123 (Arg123) interacts with coenzyme M.

The protein belongs to the methyl-coenzyme M reductase gamma subunit family. In terms of assembly, MCR is a hexamer of two alpha, two beta, and two gamma chains, forming a dimer of heterotrimers. The cofactor is coenzyme F430.

It catalyses the reaction coenzyme B + methyl-coenzyme M = methane + coenzyme M-coenzyme B heterodisulfide. It functions in the pathway one-carbon metabolism; methyl-coenzyme M reduction; methane from methyl-coenzyme M: step 1/1. In terms of biological role, component of the methyl-coenzyme M reductase (MCR) I that catalyzes the reductive cleavage of methyl-coenzyme M (CoM-S-CH3 or 2-(methylthio)ethanesulfonate) using coenzyme B (CoB or 7-mercaptoheptanoylthreonine phosphate) as reductant which results in the production of methane and the mixed heterodisulfide of CoB and CoM (CoM-S-S-CoB). This is the final step in methanogenesis. This is Methyl-coenzyme M reductase II subunit gamma (mrtG) from Methanothermus fervidus (strain ATCC 43054 / DSM 2088 / JCM 10308 / V24 S).